The chain runs to 269 residues: Ribosomal RNA small subunit methyltransferase A (269 aa).

S-adenosyl-L-methionine is bound by residues His-11, Leu-13, Gly-38, Glu-59, Asp-84, and Asn-105.

Belongs to the class I-like SAM-binding methyltransferase superfamily. rRNA adenine N(6)-methyltransferase family. RsmA subfamily.

The protein resides in the cytoplasm. It carries out the reaction adenosine(1518)/adenosine(1519) in 16S rRNA + 4 S-adenosyl-L-methionine = N(6)-dimethyladenosine(1518)/N(6)-dimethyladenosine(1519) in 16S rRNA + 4 S-adenosyl-L-homocysteine + 4 H(+). Its function is as follows. Specifically dimethylates two adjacent adenosines (A1518 and A1519) in the loop of a conserved hairpin near the 3'-end of 16S rRNA in the 30S particle. May play a critical role in biogenesis of 30S subunits. The protein is Ribosomal RNA small subunit methyltransferase A of Acaryochloris marina (strain MBIC 11017).